A 167-amino-acid polypeptide reads, in one-letter code: MAASVCSGLLGPRVLSWSRELPCAWRALHTSPVCAKNRAARVRVSKGDKPVTYEEAHAPHYIAHRKGWLSLHTGNLDGEDHAAERTVEDVFLRKFMWGTFPGCLADQLVLKRRGNQLEICAVVLRQLSPHKYYFLVGYSETLLSYFYKCPVRLHLQTVPSKVVYKYL.

The N-terminal 35 residues, 1–35 (MAASVCSGLLGPRVLSWSRELPCAWRALHTSPVCA), are a transit peptide targeting the mitochondrion.

It belongs to the universal ribosomal protein uS3 family. In terms of assembly, component of the mitochondrial small ribosomal subunit (mt-SSU). Mature mammalian 55S mitochondrial ribosomes consist of a small (28S) and a large (39S) subunit. The 28S small subunit contains a 12S ribosomal RNA (12S mt-rRNA) and 30 different proteins. The 39S large subunit contains a 16S rRNA (16S mt-rRNA), a copy of mitochondrial valine transfer RNA (mt-tRNA(Val)), which plays an integral structural role, and 52 different proteins.

The protein resides in the mitochondrion. The sequence is that of Small ribosomal subunit protein uS3m (MRPS24) from Homo sapiens (Human).